The sequence spans 216 residues: ATP phosphoribosyltransferase (216 aa).

This sequence belongs to the ATP phosphoribosyltransferase family. Short subfamily. As to quaternary structure, heteromultimer composed of HisG and HisZ subunits.

The protein resides in the cytoplasm. It catalyses the reaction 1-(5-phospho-beta-D-ribosyl)-ATP + diphosphate = 5-phospho-alpha-D-ribose 1-diphosphate + ATP. Its pathway is amino-acid biosynthesis; L-histidine biosynthesis; L-histidine from 5-phospho-alpha-D-ribose 1-diphosphate: step 1/9. Its function is as follows. Catalyzes the condensation of ATP and 5-phosphoribose 1-diphosphate to form N'-(5'-phosphoribosyl)-ATP (PR-ATP). Has a crucial role in the pathway because the rate of histidine biosynthesis seems to be controlled primarily by regulation of HisG enzymatic activity. This is ATP phosphoribosyltransferase from Acidovorax ebreus (strain TPSY) (Diaphorobacter sp. (strain TPSY)).